Here is a 51-residue protein sequence, read N- to C-terminus: Insulin (51 aa).

3 disulfides stabilise this stretch: C7–C37, C19–C50, and C36–C41.

Belongs to the insulin family. As to quaternary structure, heterodimer of a B chain and an A chain linked by two disulfide bonds.

Its subcellular location is the secreted. Functionally, insulin decreases blood glucose concentration. It increases cell permeability to monosaccharides, amino acids and fatty acids. It accelerates glycolysis, the pentose phosphate cycle, and glycogen synthesis in liver. This is Insulin (INS) from Balaenoptera physalus (Fin whale).